The sequence spans 384 residues: S-adenosylmethionine synthase (384 aa).

His15 serves as a coordination point for ATP. Asp17 serves as a coordination point for Mg(2+). Glu43 lines the K(+) pocket. L-methionine is bound by residues Glu56 and Gln99. The interval 99-109 (QSPDINQGVDR) is flexible loop. ATP-binding positions include 164-166 (DAK), 230-231 (RF), Asp239, 245-246 (RK), Ala262, and Lys266. Asp239 is an L-methionine binding site. Lys270 is a binding site for L-methionine.

Belongs to the AdoMet synthase family. Homotetramer; dimer of dimers. The cofactor is Mg(2+). Requires K(+) as cofactor.

Its subcellular location is the cytoplasm. The catalysed reaction is L-methionine + ATP + H2O = S-adenosyl-L-methionine + phosphate + diphosphate. It functions in the pathway amino-acid biosynthesis; S-adenosyl-L-methionine biosynthesis; S-adenosyl-L-methionine from L-methionine: step 1/1. In terms of biological role, catalyzes the formation of S-adenosylmethionine (AdoMet) from methionine and ATP. The overall synthetic reaction is composed of two sequential steps, AdoMet formation and the subsequent tripolyphosphate hydrolysis which occurs prior to release of AdoMet from the enzyme. In Serratia proteamaculans (strain 568), this protein is S-adenosylmethionine synthase.